Here is a 286-residue protein sequence, read N- to C-terminus: MTIRFDNVSYTYQKGTPYQHQAIHDVNTEFEQGKYYAIVGQTGSGKSTLIQNINALLKPTTGTVTVDDITITHKTKDKYIRPVRKRIGMVFQFPESQLFEDTVEREMIFGPKNFKMNLDEAKNYAHRLLMDLGFSRDVMSQSPFQMSGGQMRKIAIVSILAMNPDIIVVDEPTAGLDPQSKRQVMRLLKSLQTDENKAIILISHDMNEVARYADEVIVMKEGSIVSQTSPKELFKDKKKLADWHIGLPEIVQLQYDFEQKYQTKLKDIALTEEAFVSLYKEWQHEK.

An ABC transporter domain is found at 3-246; it reads IRFDNVSYTY…KKKLADWHIG (244 aa). Residue 40 to 47 coordinates ATP; the sequence is GQTGSGKS.

It belongs to the ABC transporter superfamily. Energy-coupling factor EcfA family. As to quaternary structure, forms a stable energy-coupling factor (ECF) transporter complex composed of 2 membrane-embedded substrate-binding proteins (S component), 2 ATP-binding proteins (A component) and 2 transmembrane proteins (T component).

It is found in the cell membrane. Its function is as follows. ATP-binding (A) component of a common energy-coupling factor (ECF) ABC-transporter complex. Unlike classic ABC transporters this ECF transporter provides the energy necessary to transport a number of different substrates. In Staphylococcus aureus (strain USA300), this protein is Energy-coupling factor transporter ATP-binding protein EcfA2.